We begin with the raw amino-acid sequence, 225 residues long: Ribosomal RNA small subunit methyltransferase G (225 aa).

S-adenosyl-L-methionine is bound by residues glycine 89, leucine 94, 140-141, and arginine 157; that span reads IE.

It belongs to the methyltransferase superfamily. RNA methyltransferase RsmG family.

It is found in the cytoplasm. The catalysed reaction is guanosine(527) in 16S rRNA + S-adenosyl-L-methionine = N(7)-methylguanosine(527) in 16S rRNA + S-adenosyl-L-homocysteine. Specifically methylates the N7 position of guanine in position 527 of 16S rRNA. The protein is Ribosomal RNA small subunit methyltransferase G of Psychrobacter sp. (strain PRwf-1).